Consider the following 228-residue polypeptide: MIKLVLVDLDGTLTEDRESTRIDLDAIYAIRLLQKSGIKVSLVSGNSYPILRGLYTYLYLDGGFVAENGCIVFYKEKYRMCRQMEQSLVDEFKSLFKLRDTWQNEYRECDFGFVPAKITDEMINWAKERNLYIKSSGYAVHIAYNPAGKRIGVEKLLQLLGLKKEDVAAIGDSSTDIELFQQVGFKVAVGNADDELKDIADYITSNKSGKGVREFVDKLLKGEFDGIK.

The active-site Nucleophile is Asp8. Residues Asp8 and Asp10 each coordinate Mg(2+). Position 149 (Lys149) interacts with substrate. Asp172 and Asp176 together coordinate Mg(2+).

Belongs to the archaeal SPP-like hydrolase family. Mg(2+) is required as a cofactor.

The catalysed reaction is 2-phosphoglycolate + H2O = glycolate + phosphate. Functionally, catalyzes the dephosphorylation of 2-phosphoglycolate. The sequence is that of Phosphoglycolate phosphatase 1 from Saccharolobus solfataricus (strain ATCC 35092 / DSM 1617 / JCM 11322 / P2) (Sulfolobus solfataricus).